The chain runs to 180 residues: NADH-quinone oxidoreductase subunit I (180 aa).

2 consecutive 4Fe-4S ferredoxin-type domains span residues 50–80 (LTRN…LQKS) and 90–119 (KFFR…LMPD). Residues Cys-60, Cys-63, Cys-66, Cys-70, Cys-99, Cys-102, Cys-105, and Cys-109 each contribute to the [4Fe-4S] cluster site.

It belongs to the complex I 23 kDa subunit family. In terms of assembly, NDH-1 is composed of 13 different subunits. Subunits NuoA, H, J, K, L, M, N constitute the membrane sector of the complex. Requires [4Fe-4S] cluster as cofactor.

The protein resides in the cell membrane. It catalyses the reaction a quinone + NADH + 5 H(+)(in) = a quinol + NAD(+) + 4 H(+)(out). Its function is as follows. NDH-1 shuttles electrons from NADH, via FMN and iron-sulfur (Fe-S) centers, to quinones in the respiratory chain. The immediate electron acceptor for the enzyme in this species is believed to be ubiquinone. Couples the redox reaction to proton translocation (for every two electrons transferred, four hydrogen ions are translocated across the cytoplasmic membrane), and thus conserves the redox energy in a proton gradient. The chain is NADH-quinone oxidoreductase subunit I from Buchnera aphidicola subsp. Acyrthosiphon pisum (strain APS) (Acyrthosiphon pisum symbiotic bacterium).